We begin with the raw amino-acid sequence, 70 residues long: uncharacterized protein (70 aa).

A helical membrane pass occupies residues 14 to 34 (CLVVWFACVYSLLILVVLLLI).

It is found in the virion membrane. This is an uncharacterized protein from Homo sapiens (Human).